Consider the following 139-residue polypeptide: Large ribosomal subunit protein eL34 (139 aa).

The segment at 113 to 139 (VSKPPKIAKAPAAAAAAKPAKTATKSK) is disordered.

Belongs to the eukaryotic ribosomal protein eL34 family.

The polypeptide is Large ribosomal subunit protein eL34 (RpL34) (Ochlerotatus triseriatus (Eastern treehole mosquito)).